We begin with the raw amino-acid sequence, 156 residues long: Arginine repressor (156 aa).

It belongs to the ArgR family.

It is found in the cytoplasm. Its pathway is amino-acid biosynthesis; L-arginine biosynthesis [regulation]. Functionally, regulates arginine biosynthesis genes. The sequence is that of Arginine repressor from Escherichia coli O81 (strain ED1a).